Reading from the N-terminus, the 257-residue chain is Zinc transporter ZupT (257 aa).

A run of 3 helical transmembrane segments spans residues 5–25 (LILTILAGAATFIGAFLGVLG), 32–52 (LLAFSLGFAAGIMLLISLMEM), and 61–81 (GMSPVLGYGMFIFGLLGYFGL). Residues N120 and E123 each contribute to the Fe(2+) site. The Zn(2+) site is built by E123 and H148. Transmembrane regions (helical) follow at residues 137 to 157 (LGFGIALAVALHNIPEGLAVA), 171 to 191 (ILWAGISGLAEILGGVLAWLI), 195 to 215 (MISPVVMAAIMAAVAGIMVAL), and 236 to 256 (GVLCGMSVMGFSLVLLQTVGI). Fe(2+) is bound by residues N149, E152, and E181. Position 152 (E152) interacts with Zn(2+).

The protein belongs to the ZIP transporter (TC 2.A.5) family. ZupT subfamily.

The protein localises to the cell inner membrane. It carries out the reaction Zn(2+)(in) = Zn(2+)(out). Mediates zinc uptake. May also transport other divalent cations. The chain is Zinc transporter ZupT from Escherichia coli O81 (strain ED1a).